A 122-amino-acid polypeptide reads, in one-letter code: Ribonuclease P protein subunit p14 (122 aa).

It belongs to the eukaryotic/archaeal RNase P protein component 2 family. In terms of assembly, RNase P consists of a catalytic RNA moiety and about 10 protein subunits; POP1, POP4, POP5, POP7, RPP14, RPP21, RPP25, RPP30, RPP38 and RPP40. Within the RNase P complex, POP1, POP7 and RPP25 form the 'finger' subcomplex, POP5, RPP14, RPP40 and homodimeric RPP30 form the 'palm' subcomplex, and RPP21, POP4 and RPP38 form the 'wrist' subcomplex. All subunits of the RNase P complex interact with the catalytic RNA.

The protein resides in the nucleus. The protein localises to the nucleolus. Component of ribonuclease P, a ribonucleoprotein complex that generates mature tRNA molecules by cleaving their 5'-ends. This Mus musculus (Mouse) protein is Ribonuclease P protein subunit p14 (Rpp14).